A 483-amino-acid polypeptide reads, in one-letter code: GTPase Der (483 aa).

2 EngA-type G domains span residues 3-167 (FTLA…GEER) and 212-387 (LRIA…EIWN). Residues 9–16 (GRPNVGKS), 56–60 (DTAGL), 119–122 (NKAE), 218–225 (GRPNAGKS), 265–269 (DTAGM), and 330–333 (NKWD) each bind GTP. A KH-like domain is found at 388–472 (RRISTGRLNR…PIRLSLRTSD (85 aa)).

The protein belongs to the TRAFAC class TrmE-Era-EngA-EngB-Septin-like GTPase superfamily. EngA (Der) GTPase family. As to quaternary structure, associates with the 50S ribosomal subunit.

Its function is as follows. GTPase that plays an essential role in the late steps of ribosome biogenesis. This Brucella suis (strain ATCC 23445 / NCTC 10510) protein is GTPase Der.